Consider the following 395-residue polypeptide: Protein BTN1 (395 aa).

An N-terminal signal peptide occupies residues 1–31 (MQLEPAHLVYAAFWTFGLVNNVLYVVILTAA). The next 10 helical transmembrane spans lie at 43-63 (VVLL…PFFI), 74-94 (LLVG…PLFL), 96-116 (LVGV…FLQL), 134-154 (GAGL…GVSV), 158-178 (LLVF…LLPP), 222-242 (PLVM…YTIN), 261-278 (FRDV…GVFI), 291-311 (IMIP…QSMS), 313-333 (ILPN…LGGA), and 355-375 (LGSV…VSLW).

It belongs to the battenin family.

Its subcellular location is the vacuole membrane. Involved in vacuolar transport and vacuole pH homeostasis. Also required for cytokinesis. This is Protein BTN1 (BTN1) from Yarrowia lipolytica (strain CLIB 122 / E 150) (Yeast).